Reading from the N-terminus, the 179-residue chain is ATP synthase subunit b (179 aa).

Residues 23-43 (IFWLIITFGILYVVLSKLILP) traverse the membrane as a helical segment.

This sequence belongs to the ATPase B chain family. In terms of assembly, F-type ATPases have 2 components, F(1) - the catalytic core - and F(0) - the membrane proton channel. F(1) has five subunits: alpha(3), beta(3), gamma(1), delta(1), epsilon(1). F(0) has three main subunits: a(1), b(2) and c(10-14). The alpha and beta chains form an alternating ring which encloses part of the gamma chain. F(1) is attached to F(0) by a central stalk formed by the gamma and epsilon chains, while a peripheral stalk is formed by the delta and b chains.

The protein resides in the cell inner membrane. In terms of biological role, f(1)F(0) ATP synthase produces ATP from ADP in the presence of a proton or sodium gradient. F-type ATPases consist of two structural domains, F(1) containing the extramembraneous catalytic core and F(0) containing the membrane proton channel, linked together by a central stalk and a peripheral stalk. During catalysis, ATP synthesis in the catalytic domain of F(1) is coupled via a rotary mechanism of the central stalk subunits to proton translocation. Its function is as follows. Component of the F(0) channel, it forms part of the peripheral stalk, linking F(1) to F(0). The sequence is that of ATP synthase subunit b from Pelagibacter ubique (strain HTCC1062).